The sequence spans 271 residues: Colicin-M (271 aa).

The TonB box motif lies at E2–P9.

In terms of biological role, colicins are polypeptide toxins produced by and active against E.coli and closely related bacteria. Its function is as follows. This is a calcium-requiring inhibitor for murein biosynthesis; it causes lysis of sensitive cells accompanied by murein degradation. The target site is possibly the cytoplasmic membrane. The protein is Colicin-M (cma) of Escherichia coli.